A 605-amino-acid chain; its full sequence is Formin-binding protein 1-like (605 aa).

An F-BAR domain is found at 1 to 263; it reads MSWGTELWDQ…AAKSVDERRD (263 aa). Residues 66-258 adopt a coiled-coil conformation; sequence FTSCIAFFNI…EGMILAAKSV (193 aa). The segment at 245–535 is interaction with CDC42; that stretch reads SKCLEGMILA…EFDDEFEDDD (291 aa). S295 bears the Phosphoserine mark. Residues 392-484 are a coiled coil; it reads LEDFSHLPPE…VEGKTGIRGD (93 aa). The region spanning 397–474 is the REM-1 domain; it reads HLPPEQRRKK…IHKNEAWLSE (78 aa). The disordered stretch occupies residues 482–538; that stretch reads RGDRRHSSDINHLVTQGRESPEGSYTDDANQEVRGPPQQHGHHSEFDDEFEDDDPLP. Residues S488, S501, and S505 each carry the phosphoserine modification. Residues 522 to 605 are interaction with DNM1; that stretch reads GHHSEFDDEF…VTLEKSSKGS (84 aa). Over residues 527-536 the composition is skewed to acidic residues; that stretch reads FDDEFEDDDP. Positions 538–599 constitute an SH3 domain; that stretch reads PAIGHCKAIY…PTTYIDVTLE (62 aa). The interaction with DNM2 and WASL stretch occupies residues 541 to 597; it reads GHCKAIYPFDGHNEGTLAMKEGEVLYIIEEDKGDGWTRARRQNGEEGYVPTTYIDVT. Residues 541–605 form an interaction with DAAM1, DIAPH1 and DIAPH2 region; sequence GHCKAIYPFD…VTLEKSSKGS (65 aa).

The protein belongs to the FNBP1 family. In terms of assembly, homodimerizes, the dimers can polymerize end-to-end to form filamentous structures. Interacts with GTP-bound CDC42. Interacts with DAAM1, DIAPH1, DIAPH2, DNM1, DNM2 and WASL/N-WASP. Interacts with ATG3. Interacts (via SH3 domain) with ABI1, WASF2, CDC42 and WIPF1.

The protein localises to the cytoplasm. Its subcellular location is the cytoskeleton. The protein resides in the cell cortex. It is found in the cytoplasmic vesicle. It localises to the cell membrane. Required to coordinate membrane tubulation with reorganization of the actin cytoskeleton during endocytosis. May bind to lipids such as phosphatidylinositol 4,5-bisphosphate and phosphatidylserine and promote membrane invagination and the formation of tubules. Also promotes CDC42-induced actin polymerization by activating the WASL-WASPIP complex, the predominant form of WASL/N-WASP in cells. Actin polymerization may promote the fission of membrane tubules to form endocytic vesicles. Essential for autophagy of intracellular bacterial pathogens. The sequence is that of Formin-binding protein 1-like (Fnbp1l) from Mus musculus (Mouse).